The following is a 278-amino-acid chain: HTH-type transcriptional activator RhaS (278 aa).

An HTH araC/xylS-type domain is found at 174–272; that stretch reads NQLMAWLEEH…NWSPRDIRQG (99 aa). 2 DNA-binding regions (H-T-H motif) span residues 191–212 and 239–262; these read EAVA…KQHT and VTEI…RREF.

In terms of assembly, binds DNA as a dimer.

It is found in the cytoplasm. Activates expression of the rhaBAD and rhaT operons. This Salmonella schwarzengrund (strain CVM19633) protein is HTH-type transcriptional activator RhaS.